The following is a 443-amino-acid chain: tRNA modification GTPase MnmE (443 aa).

Positions 23, 82, and 121 each coordinate (6S)-5-formyl-5,6,7,8-tetrahydrofolate. In terms of domain architecture, TrmE-type G spans 215–364; sequence GTSIVLAGHP…LKQFIQQWMQ (150 aa). Asparagine 225 serves as a coordination point for K(+). Residues 225-230, 244-250, and 269-272 contribute to the GTP site; these read NAGKSS, TDIPGTT, and DSAG. Serine 229 is a Mg(2+) binding site. Residues threonine 244, isoleucine 246, and threonine 249 each contribute to the K(+) site. Position 250 (threonine 250) interacts with Mg(2+). Lysine 443 is a binding site for (6S)-5-formyl-5,6,7,8-tetrahydrofolate.

Belongs to the TRAFAC class TrmE-Era-EngA-EngB-Septin-like GTPase superfamily. TrmE GTPase family. As to quaternary structure, homodimer. Heterotetramer of two MnmE and two MnmG subunits. Requires K(+) as cofactor.

Its subcellular location is the cytoplasm. In terms of biological role, exhibits a very high intrinsic GTPase hydrolysis rate. Involved in the addition of a carboxymethylaminomethyl (cmnm) group at the wobble position (U34) of certain tRNAs, forming tRNA-cmnm(5)s(2)U34. In Chlamydia abortus (strain DSM 27085 / S26/3) (Chlamydophila abortus), this protein is tRNA modification GTPase MnmE.